A 156-amino-acid polypeptide reads, in one-letter code: Ribosome maturation factor RimP (156 aa).

The protein belongs to the RimP family.

The protein localises to the cytoplasm. Its function is as follows. Required for maturation of 30S ribosomal subunits. This chain is Ribosome maturation factor RimP, found in Fusobacterium nucleatum subsp. nucleatum (strain ATCC 25586 / DSM 15643 / BCRC 10681 / CIP 101130 / JCM 8532 / KCTC 2640 / LMG 13131 / VPI 4355).